The primary structure comprises 483 residues: Cysteine--tRNA ligase (483 aa).

Zn(2+) is bound at residue Cys-29. A 'HIGH' region motif is present at residues 31–41 (PTVYGHAHLGH). Zn(2+)-binding residues include Cys-221, His-246, and Glu-250. The short motif at 278–282 (KMGKS) is the 'KMSKS' region element. Lys-281 provides a ligand contact to ATP.

Belongs to the class-I aminoacyl-tRNA synthetase family. Monomer. Zn(2+) is required as a cofactor.

It localises to the cytoplasm. The enzyme catalyses tRNA(Cys) + L-cysteine + ATP = L-cysteinyl-tRNA(Cys) + AMP + diphosphate. The sequence is that of Cysteine--tRNA ligase from Chlorobium luteolum (strain DSM 273 / BCRC 81028 / 2530) (Pelodictyon luteolum).